A 1028-amino-acid polypeptide reads, in one-letter code: Pro-apoptotic serine protease nma111 (1028 aa).

Residues 1-46 form a disordered region; the sequence is MDLNGETSTKRKRSSVAAPAERPAKHLKPGNSTLTPGDATPANGTV. The segment at 82–266 is serine protease; sequence VVSIHFCQTC…AATDYFLPLD (185 aa). Catalysis depends on charge relay system residues H120, D151, and S233. 2 PDZ domains span residues 289 to 374 and 876 to 957; these read QWIL…LLVQ and VFCG…VTFD. The span at 991 to 1001 shows a compositional bias: basic and acidic residues; the sequence is SHERDRHKDGI. The segment at 991–1028 is disordered; that stretch reads SHERDRHKDGITPDAANLNPDAMDEVYEEVSDVEPEVD. Positions 1012–1028 are enriched in acidic residues; the sequence is AMDEVYEEVSDVEPEVD.

This sequence belongs to the peptidase S1C family.

Its subcellular location is the nucleus. In terms of biological role, nuclear serine protease which mediates apoptosis. The sequence is that of Pro-apoptotic serine protease nma111 (nma111) from Aspergillus fumigatus (strain ATCC MYA-4609 / CBS 101355 / FGSC A1100 / Af293) (Neosartorya fumigata).